Here is a 407-residue protein sequence, read N- to C-terminus: Chorismate synthase (407 aa).

NADP(+) contacts are provided by Arg40 and Arg46. Residues 138 to 140 (RAS) and 259 to 260 (QA) each bind FMN. Residues 275-284 (RRGSRAHDEM) are compositionally biased toward basic and acidic residues. Positions 275-308 (RRGSRAHDEMYPGTDGVVRSTNRAGGLEGGMTNG) are disordered. FMN-binding positions include Gly303, 318-322 (KPIST), and Arg344.

The protein belongs to the chorismate synthase family. Homotetramer. Requires FMNH2 as cofactor.

It catalyses the reaction 5-O-(1-carboxyvinyl)-3-phosphoshikimate = chorismate + phosphate. It functions in the pathway metabolic intermediate biosynthesis; chorismate biosynthesis; chorismate from D-erythrose 4-phosphate and phosphoenolpyruvate: step 7/7. Functionally, catalyzes the anti-1,4-elimination of the C-3 phosphate and the C-6 proR hydrogen from 5-enolpyruvylshikimate-3-phosphate (EPSP) to yield chorismate, which is the branch point compound that serves as the starting substrate for the three terminal pathways of aromatic amino acid biosynthesis. This reaction introduces a second double bond into the aromatic ring system. The protein is Chorismate synthase of Mycobacterium marinum (strain ATCC BAA-535 / M).